Consider the following 136-residue polypeptide: Large ribosomal subunit protein uL16c (136 aa).

It belongs to the universal ribosomal protein uL16 family. In terms of assembly, part of the 50S ribosomal subunit.

It localises to the plastid. It is found in the chloroplast. The sequence is that of Large ribosomal subunit protein uL16c from Zea mays (Maize).